Consider the following 158-residue polypeptide: Sorbin and SH3 domain-containing protein 2 (158 aa).

The SoHo domain occupies 1 to 46 (MRAATPLQTVDRPKDWYKTMFKQIHMVHKPDDDTDMYNTPYTYNAG). The tract at residues 28 to 158 (HKPDDDTDMY…TKPQAGRRKV (131 aa)) is disordered. Residues 50-66 (SPYSAQSHPAAKTQTYR) show a composition bias toward polar residues. Over residues 71 to 81 (SHSDNGTDAFK) the composition is skewed to basic and acidic residues. Phosphoserine is present on Ser73. Residues 86–99 (PVPPPHVPPPVPPL) are compositionally biased toward pro residues. Residues 100–136 (RPRDRSSTEKHDWDPPDRKVDTRKFRSEPRSIFEYEP) are compositionally biased toward basic and acidic residues. Ala153 carries the alanine amide modification.

In terms of assembly, interacts with ABL1/c-Abl, ABL2/v-Abl/Arg, ACTN, AKT1, CBL, PALLD and PAK1. Interacts with ABL, CBL, DNM1, DNM2, FLOT1, AFDN, PTK2B/PYK2, SAPAP, SPTAN1, SYNJ1, SYNJ2, VCL/vinculin, and WASF. Interacts with PTPN12 and WASF1 via its SH3 domains; this interaction may mediate the partial PTPN12 and WASF1 translocation to focal adhesion sites. Ubiquitinated by CBL. In terms of processing, dephosphorylated by PTPN12. In terms of tissue distribution, expressed in duodenum.

Its subcellular location is the cytoplasm. The protein localises to the perinuclear region. The protein resides in the apical cell membrane. It is found in the cell junction. It localises to the focal adhesion. Its subcellular location is the cell projection. The protein localises to the lamellipodium. Its function is as follows. Adapter protein that plays a role in the assembling of signaling complexes, being a link between ABL kinases and actin cytoskeleton. Can form complex with ABL1 and CBL, thus promoting ubiquitination and degradation of ABL1 or with AKT1 and PAK1, thus mediating AKT1-mediated activation of PAK1. May play a role in the regulation of pancreatic cell adhesion, possibly by acting on WASF1 phosphorylation, enhancing phosphorylation by ABL1, as well as dephosphorylation by PTPN12. Increases water and sodium absorption in the intestine and gall-bladder. The protein is Sorbin and SH3 domain-containing protein 2 (SORBS2) of Sus scrofa (Pig).